The following is a 362-amino-acid chain: H-2 class I histocompatibility antigen, D-K alpha chain (362 aa).

Residues 1 to 24 (MGAMVPRTLLLLLAAALAPAQTRA) form the signal peptide. The interval 25–114 (GPHSLRYFET…LLRYYNQSEG (90 aa)) is alpha-1. Residues 25–306 (GPHSLRYFET…RWEPPPSTDS (282 aa)) are Extracellular-facing. N110 is a glycosylation site (N-linked (GlcNAc...) asparagine). An alpha-2 region spans residues 115–206 (GSHTIQRLSG…ELGNATLLHT (92 aa)). A disulfide bond links C125 and C188. N-linked (GlcNAc...) asparagine glycans are attached at residues N200 and N280. The interval 207–298 (DSPKAHVTHH…GLPEPLTLRW (92 aa)) is alpha-3. In terms of domain architecture, Ig-like C1-type spans 209–297 (PKAHVTHHPR…EGLPEPLTLR (89 aa)). Cysteines 227 and 283 form a disulfide. The tract at residues 299-306 (EPPPSTDS) is connecting peptide. Residues 307–333 (YMVIVAVLGVLGAVAIIGAVVAFVMMM) form a helical membrane-spanning segment. The Cytoplasmic portion of the chain corresponds to 334-362 (RRNTGGKGGDYTLTPGSQSSEMSLPDCKA). Positions 340-362 (KGGDYTLTPGSQSSEMSLPDCKA) are disordered. S353 and S356 each carry phosphoserine.

It belongs to the MHC class I family. As to quaternary structure, heterodimer of an alpha chain and a beta chain (beta-2-microglobulin). Post-translationally, polyubiquitinated in case of infection by murid herpesvirus 4, by the viral E3 ligase K3 (mK3), leading to target the protein for rapid degradation by the endoplasmic reticulum-associated degradation (ERAD) system. Ubiquitination takes place on lysine, as well as serine and threonine residues present in the cytoplasmic tail. Hydroxylated serine and threonine residues in the cytoplasmic tail are subject to ubiquitination via ester bonds instead of the classical isopeptide linkage. Hydroxylation of residues in the cytoplasmic tail.

It localises to the membrane. Involved in the presentation of foreign antigens to the immune system. This is H-2 class I histocompatibility antigen, D-K alpha chain (H2-D1) from Mus musculus (Mouse).